The sequence spans 452 residues: MRECISIHIGQAGIQVGNACWELYCLEHGIQPDGQMPGDKTVGGGDDAFNTFFSETGAGKHVPRAVFVDLEPTVIDEVRTGAYRQLFHPEQLISGKEDAANNFARGHYTIGKEIVDLCLDRIRKLADNCTGLQGFLVFNAVGGGTGSGLGSLLLERLSVDYGKKSKLGFTVYPSPQVSTSVVEPYNSVLSTHSLLEHTDVAVLLDNEAIYDICRRSLDIERPTYTNLNRLVSQVISSLTASLRFDGALNVDVTEFQTNLVPYPRIHFMLSSYAPVISAEKAYHEQLSVAEITNSAFEPSSMMAKCDPRHGKYMACCLMYRGDVVPKDVNAAVATIKTKRTIQFVDWCPTGFKCGINYQPPTVVPGGDLAKVQRAVCMISNSTSVAEVFSRIDHKFDLMYAKRAFVHWYVGEGMEEGEFSEAREDLAALEKDYEEVGAESGDGDDDGLGEEEY.

Glutamine 11 serves as a coordination point for GTP. Lysine 40 bears the N6-acetyllysine mark. Glutamate 71, glycine 144, threonine 145, threonine 179, asparagine 206, and asparagine 228 together coordinate GTP. Residue glutamate 71 participates in Mg(2+) binding. Glutamate 254 is a catalytic residue. The tract at residues 430–452 is disordered; the sequence is KDYEEVGAESGDGDDDGLGEEEY. Positions 431–452 are enriched in acidic residues; it reads DYEEVGAESGDGDDDGLGEEEY.

The protein belongs to the tubulin family. Dimer of alpha and beta chains. A typical microtubule is a hollow water-filled tube with an outer diameter of 25 nm and an inner diameter of 15 nM. Alpha-beta heterodimers associate head-to-tail to form protofilaments running lengthwise along the microtubule wall with the beta-tubulin subunit facing the microtubule plus end conferring a structural polarity. Microtubules usually have 13 protofilaments but different protofilament numbers can be found in some organisms and specialized cells. Requires Mg(2+) as cofactor. Undergoes a tyrosination/detyrosination cycle, the cyclic removal and re-addition of a C-terminal tyrosine residue by the enzymes tubulin tyrosine carboxypeptidase (TTCP) and tubulin tyrosine ligase (TTL), respectively. Post-translationally, acetylation of alpha chains at Lys-40 stabilizes microtubules and affects affinity and processivity of microtubule motors. This modification has a role in multiple cellular functions, ranging from cell motility, cell cycle progression or cell differentiation to intracellular trafficking and signaling.

The protein resides in the cytoplasm. It is found in the cytoskeleton. It carries out the reaction GTP + H2O = GDP + phosphate + H(+). Its function is as follows. Tubulin is the major constituent of microtubules, a cylinder consisting of laterally associated linear protofilaments composed of alpha- and beta-tubulin heterodimers. Microtubules grow by the addition of GTP-tubulin dimers to the microtubule end, where a stabilizing cap forms. Below the cap, tubulin dimers are in GDP-bound state, owing to GTPase activity of alpha-tubulin. This Pisum sativum (Garden pea) protein is Tubulin alpha-1 chain (TUBA1).